Here is a 356-residue protein sequence, read N- to C-terminus: Cobalt-precorrin-5B C(1)-methyltransferase (356 aa).

This sequence belongs to the CbiD family.

It carries out the reaction Co-precorrin-5B + S-adenosyl-L-methionine = Co-precorrin-6A + S-adenosyl-L-homocysteine. The protein operates within cofactor biosynthesis; adenosylcobalamin biosynthesis; cob(II)yrinate a,c-diamide from sirohydrochlorin (anaerobic route): step 6/10. Catalyzes the methylation of C-1 in cobalt-precorrin-5B to form cobalt-precorrin-6A. This chain is Cobalt-precorrin-5B C(1)-methyltransferase, found in Citrifermentans bemidjiense (strain ATCC BAA-1014 / DSM 16622 / JCM 12645 / Bem) (Geobacter bemidjiensis).